The primary structure comprises 454 residues: MTDRTCLSIVLAAGEGTRMKSNLPKVLHRVAGLPLVCHVVNAVRGTGKSDVALVVGRGAEDVRSAVEKIAGPVSAFEQKERLGTAHAVLAAHEAIARGYDDLLIVFGDTPLIEAQSLLAARERLAQGADLVVIGFRPASPHGYGRLIEEGGQLVAIIEEKEATDEQKKIGFCNGGLMALRGQHALALLDAVGNDNAKGEYYLTDIVAIAHGKGLNVTAIEVPVDNVIGINNRAELAEAETIWQNRKRRELMLSGVTLIAPETVFFSYDTVIEPDVVIEPNVFFGPSVHVASGALIHSFSHLEGAQVGEKAEIGPFARLRPGADLAEKSKVGNFCEVKNAKVGKGAKINHLAYIGDAVIGASSNIGAGTITCNYDGYNKFKTIIGDNAFIGSNSSLVAPVEIGDNAYIASGSVITADVPADALALGRARQETKEGRAKILREKYAAIKAAKSVSK.

The segment at 1 to 232 (MTDRTCLSIV…VDNVIGINNR (232 aa)) is pyrophosphorylase. UDP-N-acetyl-alpha-D-glucosamine contacts are provided by residues 11–14 (LAAG), Lys25, Gln78, and 83–84 (GT). Residue Asp108 coordinates Mg(2+). UDP-N-acetyl-alpha-D-glucosamine-binding residues include Gly144, Glu158, Asn173, and Asn230. Asn230 provides a ligand contact to Mg(2+). The tract at residues 233–253 (AELAEAETIWQNRKRRELMLS) is linker. The segment at 254 to 454 (GVTLIAPETV…AIKAAKSVSK (201 aa)) is N-acetyltransferase. UDP-N-acetyl-alpha-D-glucosamine-binding residues include Arg319 and Lys337. His349 serves as the catalytic Proton acceptor. The UDP-N-acetyl-alpha-D-glucosamine site is built by Tyr352 and Asn363. Residues Ala366, 372–373 (NY), Ser391, Ser409, and Arg426 contribute to the acetyl-CoA site.

In the N-terminal section; belongs to the N-acetylglucosamine-1-phosphate uridyltransferase family. The protein in the C-terminal section; belongs to the transferase hexapeptide repeat family. Homotrimer. It depends on Mg(2+) as a cofactor.

Its subcellular location is the cytoplasm. It carries out the reaction alpha-D-glucosamine 1-phosphate + acetyl-CoA = N-acetyl-alpha-D-glucosamine 1-phosphate + CoA + H(+). The enzyme catalyses N-acetyl-alpha-D-glucosamine 1-phosphate + UTP + H(+) = UDP-N-acetyl-alpha-D-glucosamine + diphosphate. It functions in the pathway nucleotide-sugar biosynthesis; UDP-N-acetyl-alpha-D-glucosamine biosynthesis; N-acetyl-alpha-D-glucosamine 1-phosphate from alpha-D-glucosamine 6-phosphate (route II): step 2/2. It participates in nucleotide-sugar biosynthesis; UDP-N-acetyl-alpha-D-glucosamine biosynthesis; UDP-N-acetyl-alpha-D-glucosamine from N-acetyl-alpha-D-glucosamine 1-phosphate: step 1/1. The protein operates within bacterial outer membrane biogenesis; LPS lipid A biosynthesis. Its function is as follows. Catalyzes the last two sequential reactions in the de novo biosynthetic pathway for UDP-N-acetylglucosamine (UDP-GlcNAc). The C-terminal domain catalyzes the transfer of acetyl group from acetyl coenzyme A to glucosamine-1-phosphate (GlcN-1-P) to produce N-acetylglucosamine-1-phosphate (GlcNAc-1-P), which is converted into UDP-GlcNAc by the transfer of uridine 5-monophosphate (from uridine 5-triphosphate), a reaction catalyzed by the N-terminal domain. The chain is Bifunctional protein GlmU from Brucella abortus (strain S19).